A 595-amino-acid chain; its full sequence is Coronatine-insensitive protein homolog 1a (595 aa).

The F-box domain occupies 20–62 (WVPDEALHLVMGHVEDPRDREAASRVCRRWHRIDALTRKHVTV). Residues Arg90, Arg351, Tyr389, Arg412, and Arg499 each contribute to the jasmonate site.

In terms of assembly, interacts with TIFY6A/JAZ3, TIFY6B/JAZ4 and TIFY11D/JAZ12 in a coronatine-dependent manner. Interacts with TIFY9/JAZ5, TIFY10A/JAZ6, TIFY10B/JAZ7, TIFY11A/JAZ9 and TIFY11C/JAZ11 in a coronatine-dependent manner.

In terms of biological role, involved in jasmonate (JA) signaling. Required for jasmonate signaling in plant defense responses. Can complement Arabidopsis coi1-1 mutant and restore jasmonate signaling. Required for JA-regulated defense responses to infestation by the leaffolder Cnaphalocrocis medinalis. May act on an initial response of jasmonate-regulated gene expression toward drought tolerance as part of a BHLH148-TIFY11D/JAZ12-COI1A complex. Component of SCF(COI1) E3 ubiquitin ligase complexes, which may mediate the ubiquitination and subsequent proteasomal degradation of target proteins, including TIFY/JAZ family. The sequence is that of Coronatine-insensitive protein homolog 1a from Oryza sativa subsp. indica (Rice).